Reading from the N-terminus, the 188-residue chain is Elongation factor P (188 aa).

This sequence belongs to the elongation factor P family.

It localises to the cytoplasm. The protein operates within protein biosynthesis; polypeptide chain elongation. In terms of biological role, involved in peptide bond synthesis. Stimulates efficient translation and peptide-bond synthesis on native or reconstituted 70S ribosomes in vitro. Probably functions indirectly by altering the affinity of the ribosome for aminoacyl-tRNA, thus increasing their reactivity as acceptors for peptidyl transferase. This chain is Elongation factor P, found in Anaplasma phagocytophilum (strain HZ).